We begin with the raw amino-acid sequence, 156 residues long: Ribosome maturation factor RimP (156 aa).

The protein belongs to the RimP family.

It is found in the cytoplasm. In terms of biological role, required for maturation of 30S ribosomal subunits. The protein is Ribosome maturation factor RimP of Prochlorococcus marinus (strain NATL2A).